The chain runs to 149 residues: Hydrogenase expression/formation protein HupT (149 aa).

It belongs to the HupJ family.

The sequence is that of Hydrogenase expression/formation protein HupT (hupT) from Azotobacter chroococcum mcd 1.